The sequence spans 217 residues: UPF0502 protein AHA_2872 (217 aa).

It belongs to the UPF0502 family.

This is UPF0502 protein AHA_2872 from Aeromonas hydrophila subsp. hydrophila (strain ATCC 7966 / DSM 30187 / BCRC 13018 / CCUG 14551 / JCM 1027 / KCTC 2358 / NCIMB 9240 / NCTC 8049).